A 262-amino-acid polypeptide reads, in one-letter code: Type III pantothenate kinase (262 aa).

12–19 (DIGNTSIA) contacts ATP. Residues Tyr94 and 109–112 (GSDV) each bind substrate. The active-site Proton acceptor is Asp111. Position 132 (Asp132) interacts with K(+). Residue Thr135 coordinates ATP. Thr187 is a binding site for substrate.

Belongs to the type III pantothenate kinase family. In terms of assembly, homodimer. NH4(+) is required as a cofactor. It depends on K(+) as a cofactor.

The protein localises to the cytoplasm. The catalysed reaction is (R)-pantothenate + ATP = (R)-4'-phosphopantothenate + ADP + H(+). Its pathway is cofactor biosynthesis; coenzyme A biosynthesis; CoA from (R)-pantothenate: step 1/5. Catalyzes the phosphorylation of pantothenate (Pan), the first step in CoA biosynthesis. The protein is Type III pantothenate kinase of Borrelia garinii subsp. bavariensis (strain ATCC BAA-2496 / DSM 23469 / PBi) (Borreliella bavariensis).